We begin with the raw amino-acid sequence, 236 residues long: Phosphoribosylaminoimidazole-succinocarboxamide synthase (236 aa).

This sequence belongs to the SAICAR synthetase family.

It catalyses the reaction 5-amino-1-(5-phospho-D-ribosyl)imidazole-4-carboxylate + L-aspartate + ATP = (2S)-2-[5-amino-1-(5-phospho-beta-D-ribosyl)imidazole-4-carboxamido]succinate + ADP + phosphate + 2 H(+). It functions in the pathway purine metabolism; IMP biosynthesis via de novo pathway; 5-amino-1-(5-phospho-D-ribosyl)imidazole-4-carboxamide from 5-amino-1-(5-phospho-D-ribosyl)imidazole-4-carboxylate: step 1/2. This is Phosphoribosylaminoimidazole-succinocarboxamide synthase from Pseudomonas putida (strain GB-1).